Reading from the N-terminus, the 402-residue chain is Acetate kinase (402 aa).

Asn7 provides a ligand contact to Mg(2+). Lys14 is an ATP binding site. Arg95 provides a ligand contact to substrate. Catalysis depends on Asp152, which acts as the Proton donor/acceptor. ATP is bound by residues 212-216 (HLGNG), 286-288 (DMR), and 334-338 (GIGEN). Glu388 lines the Mg(2+) pocket.

The protein belongs to the acetokinase family. As to quaternary structure, homodimer. The cofactor is Mg(2+). Requires Mn(2+) as cofactor.

Its subcellular location is the cytoplasm. It carries out the reaction acetate + ATP = acetyl phosphate + ADP. It participates in metabolic intermediate biosynthesis; acetyl-CoA biosynthesis; acetyl-CoA from acetate: step 1/2. In terms of biological role, catalyzes the formation of acetyl phosphate from acetate and ATP. Can also catalyze the reverse reaction. The sequence is that of Acetate kinase from Nitratidesulfovibrio vulgaris (strain DP4) (Desulfovibrio vulgaris).